The following is a 242-amino-acid chain: MGTNYRRVLLKLSGEALMGNMGYGIDPEVVKEIAQEIAEVIATGVQIAIVVGGGNIFRGVKAASAGMDRATADYIGMIATVMNAMTLQDSLERIGVQTRVQTAIAMQELAEPYIRRRAIRHLEKGRVVIFGAGSGNPFFTTDTTAALRAAEIDAEVIFKATKVDGVYDADPEIYPNAKRYNSLTYAHVLAQDLRVMDSTAIALCKENNIPILVFDLTTRGNIRRAVLGESIGTLVGGSCEIS.

An ATP-binding site is contributed by 11–14 (KLSG). The tract at residues 19–24 (GNMGYG) is involved in allosteric activation by GTP. Gly53 provides a ligand contact to UMP. Positions 54 and 58 each coordinate ATP. Residues Asp73 and 134 to 141 (SGNPFFTT) contribute to the UMP site. 3 residues coordinate ATP: Thr161, Tyr167, and Asp170.

The protein belongs to the UMP kinase family. In terms of assembly, homohexamer.

The protein resides in the cytoplasm. The catalysed reaction is UMP + ATP = UDP + ADP. It participates in pyrimidine metabolism; CTP biosynthesis via de novo pathway; UDP from UMP (UMPK route): step 1/1. Allosterically activated by GTP. Inhibited by UTP. Catalyzes the reversible phosphorylation of UMP to UDP. The chain is Uridylate kinase from Nostoc sp. (strain PCC 7120 / SAG 25.82 / UTEX 2576).